The primary structure comprises 198 residues: Recombination protein RecR (198 aa).

The segment at 57-72 adopts a C4-type zinc-finger fold; it reads CTICGHITDTDPCYIC. Residues 80 to 175 form the Toprim domain; it reads TTICVVQDPK…KVTRIAHGLP (96 aa).

Belongs to the RecR family.

Functionally, may play a role in DNA repair. It seems to be involved in an RecBC-independent recombinational process of DNA repair. It may act with RecF and RecO. The polypeptide is Recombination protein RecR (Geobacillus kaustophilus (strain HTA426)).